A 336-amino-acid chain; its full sequence is Glucokinase (336 aa).

ATP is bound at residue 12 to 17; the sequence is ADIGGT.

The protein belongs to the bacterial glucokinase family.

The protein resides in the cytoplasm. The enzyme catalyses D-glucose + ATP = D-glucose 6-phosphate + ADP + H(+). In Helicobacter pylori (strain J99 / ATCC 700824) (Campylobacter pylori J99), this protein is Glucokinase.